Reading from the N-terminus, the 999-residue chain is Sarcoplasmic/endoplasmic reticulum calcium ATPase 3 (999 aa).

Met1 carries the N-acetylmethionine modification. At 1-48 the chain is on the cytoplasmic side; that stretch reads MEAAHLLPAADVLRHFSVTAEGGLSPAQVTGARERYGPNELPSEEGKS. A Phosphoserine modification is found at Ser17. Thr19 is subject to Phosphothreonine. Residue Ser25 is modified to Phosphoserine. Residues 49–69 traverse the membrane as a helical segment; that stretch reads LWELVLEQFEDLLVRILLLAA. Residues 70–89 lie on the Lumenal side of the membrane; the sequence is LVSFVLAWFEEGEETTTAFV. Residues 90-110 form a helical membrane-spanning segment; that stretch reads EPLVIMLILVANAIVGVWQER. Residues 111 to 253 lie on the Cytoplasmic side of the membrane; sequence NAESAIEALK…PERTPLQRKL (143 aa). Residues 254–273 traverse the membrane as a helical segment; it reads DEFGRQLSHAISVICVAVWV. Over 274–295 the chain is Lumenal; the sequence is INIGHFADPAHGGSWLRGAVYY. Residues 296–313 traverse the membrane as a helical segment; the sequence is FKIAVALAVAAIPEGLPA. Residues Val304, Ala305, Ile307, and Glu309 each contribute to the Ca(2+) site. Topologically, residues 314–757 are cytoplasmic; the sequence is VITTCLALGT…EEGRAIYSNM (444 aa). The 4-aspartylphosphate intermediate role is filled by Asp351. Asp351 and Thr353 together coordinate Mg(2+). ATP is bound at residue Thr353. The interval 370–400 is interaction with phospholamban 1; that stretch reads AEADAGSCLLHEFTISGTTYTPEGEVRQGDQ. At Thr415 the chain carries Phosphothreonine. Glu442, Arg489, Lys515, Arg560, Thr625, Gly626, and Asp627 together coordinate ATP. Ser662 carries the post-translational modification Phosphoserine. The ATP site is built by Arg678 and Lys684. Residue Asp703 participates in Mg(2+) binding. Asn706 serves as a coordination point for ATP. Residues 758–777 traverse the membrane as a helical segment; the sequence is KQFIRYLISSNVGEVVCIFL. Asn768 and Glu771 together coordinate Ca(2+). Residues 778 to 787 lie on the Lumenal side of the membrane; the sequence is TAILGLPEAL. The chain crosses the membrane as a helical span at residues 788 to 808; it reads IPVQLLWVNLVTDGLPATALG. Positions 788–808 are interaction with phospholamban 2; that stretch reads IPVQLLWVNLVTDGLPATALG. Asn796, Thr799, and Asp800 together coordinate Ca(2+). The Cytoplasmic portion of the chain corresponds to 809 to 828; it reads FNPPDLDIMEKLPRSPREAL. The helical transmembrane segment at 829–851 threads the bilayer; sequence ISGWLFFRYLAIGVYVGLATVAA. Over 852 to 897 the chain is Lumenal; that stretch reads ATWWFVYDAEGPHINFYQLRNFLKCSEDNPLFAGIDCEVFESRFPT. A helical membrane pass occupies residues 898 to 917; sequence TMALSVLVTIEMCNALNSVS. Glu908 is a Ca(2+) binding site. At 918–930 the chain is on the cytoplasmic side; the sequence is ENQSLLRMPPWMN. Residues 931–949 form a helical membrane-spanning segment; the sequence is PWLLVAVAMSMALHFLILL. At 950–964 the chain is on the lumenal side; the sequence is VPPLPLIFQVTPLSG. Residues 965–985 form a helical membrane-spanning segment; it reads RQWVVVLQISLPVILLDEALK. The Cytoplasmic segment spans residues 986–999; the sequence is YLSRNHMHEEMSQK.

It belongs to the cation transport ATPase (P-type) (TC 3.A.3) family. Type IIA subfamily. Interacts with sarcolipin (SLN). Interacts with phospholamban (PLN). Interacts with myoregulin (MRLN). Interacts with DWORF. Interacts with VMP1. Interacts with TUNAR; the interaction occurs at low levels in low glucose conditions and is increased by high glucose levels. It depends on Mg(2+) as a cofactor. As to expression, found in most tissues. Most abundant in thymus, trachea, salivary gland, spleen, bone marrow, lymph node, peripheral leukocytes, pancreas and colon. Also detected in fetal tissues. Expressed in cell lineages of hematopoietic, epithelial, or embryonic origin and also expressed in several cancer cell lines.

It is found in the nucleus membrane. Its subcellular location is the endoplasmic reticulum membrane. The protein localises to the sarcoplasmic reticulum membrane. The catalysed reaction is Ca(2+)(in) + ATP + H2O = Ca(2+)(out) + ADP + phosphate + H(+). Its activity is regulated as follows. Inhibited by sarcolipin (SLN), phospholamban (PLN) and myoregulin (MRLN). Enhanced by DWORF; DWORF increases activity by displacing sarcolipin (SLN), phospholamban (PLN) and myoregulin (MRLN). Its function is as follows. This magnesium-dependent enzyme catalyzes the hydrolysis of ATP coupled with the transport of calcium. Transports calcium ions from the cytosol into the sarcoplasmic/endoplasmic reticulum lumen. Contributes to calcium sequestration involved in muscular excitation/contraction. The polypeptide is Sarcoplasmic/endoplasmic reticulum calcium ATPase 3 (Homo sapiens (Human)).